A 359-amino-acid polypeptide reads, in one-letter code: Adenosine 3'-phospho 5'-phosphosulfate transporter 1 (359 aa).

7 consecutive transmembrane segments (helical) span residues 26–46, 68–88, 157–177, 184–204, 228–248, 254–276, and 300–320; these read NMKLALATGGIMGSFLLYGIL, STFLVLSNRVFAALMAIVIVL, YSIALTITTGCMIFFLTGKIS, TSYGIILMALYMFFDSFTSTF, SIISVFILILNGRLFPAIEFI, VFFDSTMLSASAGLGQMVIYYTI, and TLIYLHPLSNTQWIGALLVFG. The interval 332–359 is disordered; that stretch reads KKHGGHSHGGSNAATTTTPSNNSNNTEK. Low complexity predominate over residues 340–359; sequence GGSNAATTTTPSNNSNNTEK.

It belongs to the nucleotide-sugar transporter family. SLC35B subfamily.

The protein resides in the golgi apparatus membrane. It carries out the reaction 3'-phosphoadenylyl sulfate(in) + adenosine 3',5'-bisphosphate(out) = 3'-phosphoadenylyl sulfate(out) + adenosine 3',5'-bisphosphate(in). Functionally, probably functions as a 3'-phosphoadenylyl sulfate:adenosine 3',5'-bisphosphate antiporter at the Golgi membranes. Mediates the transport from the cytosol into the lumen of the Golgi of 3'-phosphoadenylyl sulfate/adenosine 3'-phospho 5'-phosphosulfate (PAPS), a universal sulfuryl donor for sulfation events that take place in that compartment. In Dictyostelium discoideum (Social amoeba), this protein is Adenosine 3'-phospho 5'-phosphosulfate transporter 1 (slc35b2).